The sequence spans 323 residues: Transcription factor MafB (323 aa).

A Glycyl lysine isopeptide (Lys-Gly) (interchain with G-Cter in SUMO) cross-link involves residue Lys32. Residues Glu34 to Gly43 are compositionally biased toward basic and acidic residues. Disordered regions lie at residues Glu34–Gln78 and Pro116–Arg210. A compositionally biased stretch (low complexity) spans Ser54–Thr76. Composition is skewed to basic residues over residues Gly129–His143 and Ala159–Gln168. The segment covering Pro192–Ala201 has biased composition (low complexity). A basic motif region spans residues Arg238–Lys263. Positions Arg238 to Leu301 constitute a bZIP domain. Residues Leu266 to Leu287 are leucine-zipper. Lys297 is covalently cross-linked (Glycyl lysine isopeptide (Lys-Gly) (interchain with G-Cter in SUMO)).

It belongs to the bZIP family. Maf subfamily. As to quaternary structure, homodimer or heterodimer with other bHLH-Zip transcription factors. Binds DNA as a homodimer or a heterodimer. Forms homodimers and heterodimers with FOS, FOSB and FOSL2, but not with JUN proteins (JUN, JUNB and JUND). Interacts with PAX6; the interaction is direct. Interacts with ETS1 and LRP1. Interacts with the intracellular cytoplasmic domain of LRP1 (LRPICD); the interaction results in a moderate reduction of MAFB transcriptional potential. Post-translationally, sumoylated. Sumoylation on Lys-32 and Lys-297 stimulates its transcriptional repression activity and promotes macrophage differentiation from myeloid progenitors.

The protein resides in the nucleus. Acts as a transcriptional activator or repressor. Plays a pivotal role in regulating lineage-specific hematopoiesis by repressing ETS1-mediated transcription of erythroid-specific genes in myeloid cells. Required for monocytic, macrophage, osteoclast, podocyte and islet beta cell differentiation. Involved in renal tubule survival and F4/80 maturation. Activates the insulin and glucagon promoters. Together with PAX6, transactivates weakly the glucagon gene promoter through the G1 element. SUMO modification controls its transcriptional activity and ability to specify macrophage fate. Binds element G1 on the glucagon promoter. Involved either as an oncogene or as a tumor suppressor, depending on the cell context. Required for the transcriptional activation of HOXB3 in the rhombomere r5 in the hindbrain. This is Transcription factor MafB (MAFB) from Macaca fascicularis (Crab-eating macaque).